A 347-amino-acid chain; its full sequence is 4-hydroxy-2-oxovalerate aldolase 2 (347 aa).

The 251-residue stretch at 9-259 (ITIVDTTLRD…DTGVDLFPLI (251 aa)) folds into the Pyruvate carboxyltransferase domain. Substrate contacts are provided by residues 17–18 (RD), S171, and H198. Residue D18 coordinates Mn(2+). Residues H198 and H200 each coordinate Mn(2+). Y289 serves as a coordination point for substrate.

This sequence belongs to the 4-hydroxy-2-oxovalerate aldolase family.

The enzyme catalyses (S)-4-hydroxy-2-oxopentanoate = acetaldehyde + pyruvate. This chain is 4-hydroxy-2-oxovalerate aldolase 2, found in Rhodococcus opacus (strain B4).